An 84-amino-acid chain; its full sequence is Carboxysome shell vertex protein CsoS4B (84 aa).

Residues 1–77 (MQILQVKKQL…TDLTVGGIID (77 aa)) form the BMV domain.

The protein belongs to the CcmL/EutN family. CsoS4 subfamily. As to quaternary structure, homopentamer.

The protein resides in the carboxysome. Its function is as follows. Probably forms vertices in the carboxysome, a polyhedral inclusion where RuBisCO (ribulose bisphosphate carboxylase, cbbL-cbbS) is sequestered. Has been modeled to induce curvature upon insertion into an otherwise flat hexagonal layer of major carboxysome subunits. The protein is Carboxysome shell vertex protein CsoS4B of Hydrogenovibrio crunogenus (strain DSM 25203 / XCL-2) (Thiomicrospira crunogena).